A 468-amino-acid polypeptide reads, in one-letter code: MNKGRVTQIMGPVVDVKFDGGKLPEIYNALTVKQSNENGSMNLTFEVALHLGDDTVRTVAMSSTDGLVRGTEVEDTGKAISVPVGDVTLGRVFNVLGDAIDLDGELPADVHRDPIHRQAPAFEELSTKVEILETGIKVVDLLAPYIKGGKIGLFGGAGVGKTVLIQELINNIAQEHGGISVFAGVGERTREGNDLYHEMSDSGVIKKTAMVFGQMNEPPGARQRVALTGLTMAEHFRDEQGQDVLLFIDNIFRFTQAGSEVSALLGRMPSAVGYQPTLATEMGQLQERITSTNKGSITSIQAVYVPADDYTDPAPATTFAHLDATTNLERRLTQMGIYPAVDPLASTSRALSPEIVGEEHYEVARQVQQTLQRYKELQDIIAILGMDELSEEDKLVVHRARRIQFFLSQNFHVAEQFTGQKGSYVPVKNTVSGFKEILEGKYDDLPEDAFRLVGGIEEVIENAKKMMA.

155 to 162 is a binding site for ATP; the sequence is GGAGVGKT.

The protein belongs to the ATPase alpha/beta chains family. As to quaternary structure, F-type ATPases have 2 components, CF(1) - the catalytic core - and CF(0) - the membrane proton channel. CF(1) has five subunits: alpha(3), beta(3), gamma(1), delta(1), epsilon(1). CF(0) has three main subunits: a(1), b(2) and c(9-12). The alpha and beta chains form an alternating ring which encloses part of the gamma chain. CF(1) is attached to CF(0) by a central stalk formed by the gamma and epsilon chains, while a peripheral stalk is formed by the delta and b chains.

The protein localises to the cell membrane. It catalyses the reaction ATP + H2O + 4 H(+)(in) = ADP + phosphate + 5 H(+)(out). Produces ATP from ADP in the presence of a proton gradient across the membrane. The catalytic sites are hosted primarily by the beta subunits. This Bacillus cereus (strain G9842) protein is ATP synthase subunit beta.